Consider the following 242-residue polypeptide: Succinyl-CoA:3-ketoacid coenzyme A transferase subunit A (242 aa).

33–39 (GGFGLCG) serves as a coordination point for CoA.

This sequence belongs to the 3-oxoacid CoA-transferase subunit A family. In terms of assembly, heterodimer of a subunit A and a subunit B.

It carries out the reaction a 3-oxo acid + succinyl-CoA = a 3-oxoacyl-CoA + succinate. The protein operates within bacterial outer membrane biogenesis; lipopolysaccharide biosynthesis. This chain is Succinyl-CoA:3-ketoacid coenzyme A transferase subunit A (lpsI), found in Xanthomonas campestris pv. campestris (strain B100).